A 114-amino-acid polypeptide reads, in one-letter code: Cytochrome c2 (114 aa).

Gln1 is subject to Pyrrolidone carboxylic acid. Positions 13, 16, 17, and 93 each coordinate heme c.

It belongs to the cytochrome c family. In terms of processing, binds 1 heme c group covalently per subunit.

The protein localises to the periplasm. Its function is as follows. Cytochrome c2 is found mainly in purple, non-sulfur, photosynthetic bacteria where it functions as the electron donor to the oxidized bacteriochlorophyll in the photophosphorylation pathway. However, it may also have a role in the respiratory chain and is found in some non-photosynthetic bacteria. The polypeptide is Cytochrome c2 (Rhodopseudomonas palustris).